The sequence spans 104 residues: Phosphoribosyl-ATP pyrophosphatase (104 aa).

This sequence belongs to the PRA-PH family.

It is found in the cytoplasm. It carries out the reaction 1-(5-phospho-beta-D-ribosyl)-ATP + H2O = 1-(5-phospho-beta-D-ribosyl)-5'-AMP + diphosphate + H(+). It participates in amino-acid biosynthesis; L-histidine biosynthesis; L-histidine from 5-phospho-alpha-D-ribose 1-diphosphate: step 2/9. The protein is Phosphoribosyl-ATP pyrophosphatase of Erythrobacter litoralis (strain HTCC2594).